The primary structure comprises 366 residues: tRNA/tmRNA (uracil-C(5))-methyltransferase (366 aa).

Residues glutamine 190, tyrosine 218, asparagine 223, glutamate 239, and aspartate 299 each contribute to the S-adenosyl-L-methionine site. The active-site Nucleophile is the cysteine 324. Glutamate 358 acts as the Proton acceptor in catalysis.

This sequence belongs to the class I-like SAM-binding methyltransferase superfamily. RNA M5U methyltransferase family. TrmA subfamily.

The enzyme catalyses uridine(54) in tRNA + S-adenosyl-L-methionine = 5-methyluridine(54) in tRNA + S-adenosyl-L-homocysteine + H(+). The catalysed reaction is uridine(341) in tmRNA + S-adenosyl-L-methionine = 5-methyluridine(341) in tmRNA + S-adenosyl-L-homocysteine + H(+). In terms of biological role, dual-specificity methyltransferase that catalyzes the formation of 5-methyluridine at position 54 (m5U54) in all tRNAs, and that of position 341 (m5U341) in tmRNA (transfer-mRNA). The sequence is that of tRNA/tmRNA (uracil-C(5))-methyltransferase from Escherichia fergusonii (strain ATCC 35469 / DSM 13698 / CCUG 18766 / IAM 14443 / JCM 21226 / LMG 7866 / NBRC 102419 / NCTC 12128 / CDC 0568-73).